The primary structure comprises 306 residues: Proteasome subunit beta (306 aa).

The propeptide at 1–67 (MTWPNRDQPA…GLPTDAVPHG (67 aa)) is removed in mature form; by autocatalysis. T68 functions as the Nucleophile in the catalytic mechanism.

It belongs to the peptidase T1B family. As to quaternary structure, the 20S proteasome core is composed of 14 alpha and 14 beta subunits that assemble into four stacked heptameric rings, resulting in a barrel-shaped structure. The two inner rings, each composed of seven catalytic beta subunits, are sandwiched by two outer rings, each composed of seven alpha subunits. The catalytic chamber with the active sites is on the inside of the barrel. Has a gated structure, the ends of the cylinder being occluded by the N-termini of the alpha-subunits. Is capped by the proteasome-associated ATPase, ARC.

Its subcellular location is the cytoplasm. The enzyme catalyses Cleavage of peptide bonds with very broad specificity.. It participates in protein degradation; proteasomal Pup-dependent pathway. The formation of the proteasomal ATPase ARC-20S proteasome complex, likely via the docking of the C-termini of ARC into the intersubunit pockets in the alpha-rings, may trigger opening of the gate for substrate entry. Interconversion between the open-gate and close-gate conformations leads to a dynamic regulation of the 20S proteasome proteolysis activity. Functionally, component of the proteasome core, a large protease complex with broad specificity involved in protein degradation. The sequence is that of Proteasome subunit beta from Mycolicibacterium vanbaalenii (strain DSM 7251 / JCM 13017 / BCRC 16820 / KCTC 9966 / NRRL B-24157 / PYR-1) (Mycobacterium vanbaalenii).